The sequence spans 194 residues: Imidazoleglycerol-phosphate dehydratase (194 aa).

This sequence belongs to the imidazoleglycerol-phosphate dehydratase family.

It is found in the cytoplasm. It carries out the reaction D-erythro-1-(imidazol-4-yl)glycerol 3-phosphate = 3-(imidazol-4-yl)-2-oxopropyl phosphate + H2O. It functions in the pathway amino-acid biosynthesis; L-histidine biosynthesis; L-histidine from 5-phospho-alpha-D-ribose 1-diphosphate: step 6/9. This Thermus thermophilus (strain ATCC 27634 / DSM 579 / HB8) protein is Imidazoleglycerol-phosphate dehydratase.